The following is a 211-amino-acid chain: Proteasome subunit beta (211 aa).

Residues 1–8 (MNQTLETG) constitute a propeptide, removed in mature form; by autocatalysis. The active-site Nucleophile is Thr9.

It belongs to the peptidase T1B family. The 20S proteasome core is composed of 14 alpha and 14 beta subunits that assemble into four stacked heptameric rings, resulting in a barrel-shaped structure. The two inner rings, each composed of seven catalytic beta subunits, are sandwiched by two outer rings, each composed of seven alpha subunits. The catalytic chamber with the active sites is on the inside of the barrel. Has a gated structure, the ends of the cylinder being occluded by the N-termini of the alpha-subunits. Is capped at one or both ends by the proteasome regulatory ATPase, PAN.

The protein resides in the cytoplasm. The enzyme catalyses Cleavage of peptide bonds with very broad specificity.. With respect to regulation, the formation of the proteasomal ATPase PAN-20S proteasome complex, via the docking of the C-termini of PAN into the intersubunit pockets in the alpha-rings, triggers opening of the gate for substrate entry. Interconversion between the open-gate and close-gate conformations leads to a dynamic regulation of the 20S proteasome proteolysis activity. In terms of biological role, component of the proteasome core, a large protease complex with broad specificity involved in protein degradation. The T.acidophilum proteasome is able to cleave oligopeptides after Tyr, Leu, Phe, and to a lesser extent after Glu and Arg. Thus, displays chymotrypsin-like activity and low level of caspase-like and trypsin-like activities. The protein is Proteasome subunit beta of Thermoplasma acidophilum (strain ATCC 25905 / DSM 1728 / JCM 9062 / NBRC 15155 / AMRC-C165).